A 710-amino-acid chain; its full sequence is Elongation factor G (710 aa).

The tr-type G domain occupies 8–290 (SQYRNIGISA…AIVEYLPSPM (283 aa)). GTP contacts are provided by residues 17–24 (AHIDAGKT), 88–92 (DTPGH), and 142–145 (NKMD).

Belongs to the TRAFAC class translation factor GTPase superfamily. Classic translation factor GTPase family. EF-G/EF-2 subfamily.

It is found in the cytoplasm. Functionally, catalyzes the GTP-dependent ribosomal translocation step during translation elongation. During this step, the ribosome changes from the pre-translocational (PRE) to the post-translocational (POST) state as the newly formed A-site-bound peptidyl-tRNA and P-site-bound deacylated tRNA move to the P and E sites, respectively. Catalyzes the coordinated movement of the two tRNA molecules, the mRNA and conformational changes in the ribosome. This is Elongation factor G from Buchnera aphidicola subsp. Baizongia pistaciae (strain Bp).